Consider the following 375-residue polypeptide: Decapping and exoribonuclease protein Rai1 (375 aa).

Residues arginine 43 and 120–122 (LRG) each bind substrate. Mg(2+) contacts are provided by glutamate 180, glutamate 222, aspartate 224, glutamate 247, and leucine 248. Residue glutamate 222 participates in substrate binding. Residues lysine 249 and glutamine 274 each contribute to the substrate site.

The protein belongs to the DXO/Dom3Z family. As to quaternary structure, interacts with Rat1. Requires Mg(2+) as cofactor.

It catalyses the reaction a 5'-end triphospho-ribonucleoside in mRNA + H2O = a 5'-end phospho-ribonucleoside in mRNA + diphosphate + H(+). The catalysed reaction is a 5'-end NAD(+)-phospho-ribonucleoside in mRNA + H2O = a 5'-end phospho-ribonucleoside in mRNA + NAD(+) + H(+). It carries out the reaction a 5'-end (N(7)-methyl 5'-triphosphoguanosine)-ribonucleoside-ribonucleotide in mRNA + H2O = a (N(7)-methyl 5'-triphosphoguanosine)-nucleoside + a 5'-end phospho-ribonucleoside in mRNA + H(+). Decapping enzyme for NAD-capped RNAs: specifically hydrolyzes the nicotinamide adenine dinucleotide (NAD) cap from a subset of RNAs by removing the entire NAD moiety from the 5'-end of an NAD-capped RNA. The NAD-cap is present at the 5'-end of some RNAs and snoRNAs. In contrast to the canonical 5'-end N7 methylguanosine (m7G) cap, the NAD cap promotes mRNA decay. Also acts as a non-canonical decapping enzyme that removes the entire cap structure of m7G capped or incompletely capped RNAs and mediates their subsequent degradation. Specifically degrades pre-mRNAs with a defective 5'-end m7G cap and is part of a pre-mRNA capping quality control. Possesses 5'-pyrophosphohydrolase activity, hydrolyzing the 5'-end triphosphate to release pyrophosphates, and 5'-3' exonuclease activity. May be involved in RNA degradation in the nucleus. The polypeptide is Decapping and exoribonuclease protein Rai1 (Drosophila melanogaster (Fruit fly)).